The sequence spans 127 residues: I-Kappa-B like protein J1 (127 aa).

ANK repeat units follow at residues 43–76 (HGNT…DLDE) and 81–111 (DGDT…RFGS).

It belongs to the polydnaviridae I-Kappa-B-like protein family.

Its function is as follows. Suppresses the host immune response through NF-kappa-B inactivation. Possesses ankyrin repeat domains required for NF-kappa-B binding but lacks the regulatory regions required for dissociation from NF-kappa-B and degradation. Therefore, prevents host NF-kappa-B release and subsequent activation. In Microplitis demolitor (Parasitoid wasp), this protein is I-Kappa-B like protein J1 (J2).